Here is a 114-residue protein sequence, read N- to C-terminus: Large ribosomal subunit protein uL22 (114 aa).

It belongs to the universal ribosomal protein uL22 family. As to quaternary structure, part of the 50S ribosomal subunit.

This protein binds specifically to 23S rRNA; its binding is stimulated by other ribosomal proteins, e.g. L4, L17, and L20. It is important during the early stages of 50S assembly. It makes multiple contacts with different domains of the 23S rRNA in the assembled 50S subunit and ribosome. Functionally, the globular domain of the protein is located near the polypeptide exit tunnel on the outside of the subunit, while an extended beta-hairpin is found that lines the wall of the exit tunnel in the center of the 70S ribosome. This chain is Large ribosomal subunit protein uL22, found in Ehrlichia canis (strain Jake).